The sequence spans 367 residues: tRNA/tmRNA (uracil-C(5))-methyltransferase (367 aa).

S-adenosyl-L-methionine contacts are provided by Q190, Y218, N223, E239, and D299. The Nucleophile role is filled by C324. Catalysis depends on E358, which acts as the Proton acceptor.

Belongs to the class I-like SAM-binding methyltransferase superfamily. RNA M5U methyltransferase family. TrmA subfamily.

It carries out the reaction uridine(54) in tRNA + S-adenosyl-L-methionine = 5-methyluridine(54) in tRNA + S-adenosyl-L-homocysteine + H(+). The catalysed reaction is uridine(341) in tmRNA + S-adenosyl-L-methionine = 5-methyluridine(341) in tmRNA + S-adenosyl-L-homocysteine + H(+). Its function is as follows. Dual-specificity methyltransferase that catalyzes the formation of 5-methyluridine at position 54 (m5U54) in all tRNAs, and that of position 341 (m5U341) in tmRNA (transfer-mRNA). The protein is tRNA/tmRNA (uracil-C(5))-methyltransferase of Dickeya chrysanthemi (strain Ech1591) (Dickeya zeae (strain Ech1591)).